We begin with the raw amino-acid sequence, 261 residues long: MHSPISGSFTSSTQVHDPIHPANSDGFRETLANVELRTKSPSAECPDKMGCCASKPQASDPNNPSTSSPARPSTSLFRYRTAELAQANADGICVGLTAEWLRNLNSHPSIRMEALVPGSQRHASATVRQKEYENLKVHLRRQGAGPSEADFAAQNTMLQKAGLAPSGKEKVYKVGEPNFPRMLTKITADGSNHLLSLYFAEGGAHTVATSAMDGNTTLFDPNFGEFTVQSDQIDDLFRSLANRYSNPNRQHLTTVTTQKMT.

Over residues 1 to 15 the composition is skewed to polar residues; that stretch reads MHSPISGSFTSSTQV. Disordered regions lie at residues 1–48 and 54–73; these read MHSP…CPDK and SKPQ…ARPS. Residues 61 to 73 are compositionally biased toward low complexity; the sequence is PNNPSTSSPARPS. Active-site residues include Cys-93, His-205, and Asp-220.

The protein belongs to the peptidase C58 family.

Functionally, potential cysteine protease, which may play a central role after invasion of host cell. The sequence is that of Putative cysteine protease YopT-like y4zC from Sinorhizobium fredii (strain NBRC 101917 / NGR234).